Consider the following 931-residue polypeptide: Protein unc-45 homolog B (931 aa).

3 TPR repeats span residues Ala-6–Lys-39, Ala-43–Asp-76, and Ile-77–Asn-110. ARM repeat units lie at residues Glu-169 to Ser-208, Gln-211 to Asp-250, and Asp-751 to Leu-790.

Interacts with HSP90 in an ATP-independent manner. Interacts with UBE4B; the interaction may target UNC45B for proteasomal degradation. As to expression, expressed in eye lens tissues. Expressed in muscle (at protein level).

Its subcellular location is the cytoplasm. It localises to the myofibril. The protein resides in the sarcomere. The protein localises to the z line. It is found in the a band. Its subcellular location is the perinuclear region. It localises to the cytosol. In terms of biological role, acts as a co-chaperone for HSP90 and is required for proper folding of the myosin motor domain. Plays a role in sarcomere formation during muscle cell development. Is necessary for normal early lens development. The protein is Protein unc-45 homolog B of Homo sapiens (Human).